Here is a 426-residue protein sequence, read N- to C-terminus: Dynein regulatory complex protein 10 (426 aa).

Disordered regions lie at residues 18–37 (TRIG…LKPL) and 399–426 (SKKK…KGKK). Residues 377 to 406 (MVRAATLIQAFWKGYLVRSLLRSKKKRGKG) form the IQ domain. Positions 399–408 (SKKKRGKGKA) are enriched in basic residues. Basic and acidic residues predominate over residues 409–426 (KGKEKGKQKGKEKGKGKK).

Belongs to the DRC10 family. In terms of assembly, component of the nexin-dynein regulatory complex (N-DRC). Interacts with CFAP52.

Its subcellular location is the cytoplasm. It localises to the cytoskeleton. The protein localises to the flagellum axoneme. Its function is as follows. Component of the nexin-dynein regulatory complex (N-DRC), a key regulator of ciliary/flagellar motility which maintains the alignment and integrity of the distal axoneme and regulates microtubule sliding in motile axonemes. This Macaca fascicularis (Crab-eating macaque) protein is Dynein regulatory complex protein 10 (IQCD).